Consider the following 31-residue polypeptide: Spectrin beta chain, non-erythrocytic 1 (31 aa).

Spectrin repeat units follow at residues 1-10 (VLLLSQDYGK), 11-19 (YKEVAELTR), and 20-31 (TQILAASYELHK). Residue Y27 is modified to Phosphotyrosine.

It belongs to the spectrin family. Interacts with ANK2. Interacts with CPNE4 (via VWFA domain). Like erythrocyte spectrin, the spectrin-like proteins are capable to form dimers which can further associate to tetramers. Associates with the gamma-tubulin complex in brain, but not in kidney, liver, sperm, or uterus. Interacts with CAMSAP1. Can form heterodimers with SPTAN1.

Its subcellular location is the cytoplasm. The protein resides in the cytoskeleton. It is found in the myofibril. It localises to the sarcomere. The protein localises to the m line. Its subcellular location is the cytosol. The protein resides in the cell membrane. Its function is as follows. Fodrin, which seems to be involved in secretion, interacts with calmodulin in a calcium-dependent manner and is thus candidate for the calcium-dependent movement of the cytoskeleton at the membrane. Plays a critical role in central nervous system development and function. The protein is Spectrin beta chain, non-erythrocytic 1 (SPTBN1) of Capra hircus (Goat).